A 322-amino-acid polypeptide reads, in one-letter code: Mas-related G-protein coupled receptor member X3 (322 aa).

Over 1 to 31 (MDPTIPALGTSQTPINRREETPCYKQTLSLT) the chain is Extracellular. A helical membrane pass occupies residues 32–52 (VLTCIISLVGLTGNAVVLWLL). The Cytoplasmic segment spans residues 53 to 60 (GFRMRRNA). A helical membrane pass occupies residues 61-81 (VSTYILNLAAVDFLFLSGHIV). Residues 82-96 (RSPLRLISIRHPISK) lie on the Extracellular side of the membrane. A helical membrane pass occupies residues 97 to 117 (IVNPVMTFPYFIGLSMLSAIS). Topologically, residues 118–139 (TERCLSVLWPMWYRCRRPRHLS) are cytoplasmic. The helical transmembrane segment at 140 to 160 (VVVCVLLWALSLLRSILEWMF) threads the bilayer. Over 161-177 (CDFLFSGADSVWCETSD) the chain is Extracellular. The chain crosses the membrane as a helical span at residues 178 to 198 (FITIAWLIFLCVVLCGSSLVL). The Cytoplasmic segment spans residues 199-213 (LVRILCGSRKMPLTR). Residues 214-234 (LYVTILLTVLVFLLCGLPFGI) traverse the membrane as a helical segment. The Extracellular portion of the chain corresponds to 235–254 (QWALFSRIHLDWKVLFCHVH). Residues 255–275 (LISVFLSSLNSSANPIIYFFV) form a helical membrane-spanning segment. Residues 276-322 (GSFRQRQNRQNLKLVLQRALQDTPEVDEGGGRLPEETLELSVSRLEQ) are Cytoplasmic-facing.

It belongs to the G-protein coupled receptor 1 family. Mas subfamily.

The protein localises to the cell membrane. Orphan receptor. Probably involved in the function of nociceptive neurons. May regulate nociceptor function and/or development, including the sensation or modulation of pain. Potently activated by enkephalins. This is Mas-related G-protein coupled receptor member X3 (MRGPRX3) from Macaca mulatta (Rhesus macaque).